The sequence spans 314 residues: Ribonuclease Z (314 aa).

Positions 63, 65, 67, 68, 142, 205, and 263 each coordinate Zn(2+). Aspartate 67 serves as the catalytic Proton acceptor.

Belongs to the RNase Z family. Homodimer. Requires Zn(2+) as cofactor.

The catalysed reaction is Endonucleolytic cleavage of RNA, removing extra 3' nucleotides from tRNA precursor, generating 3' termini of tRNAs. A 3'-hydroxy group is left at the tRNA terminus and a 5'-phosphoryl group is left at the trailer molecule.. Its function is as follows. Zinc phosphodiesterase, which displays some tRNA 3'-processing endonuclease activity. Probably involved in tRNA maturation, by removing a 3'-trailer from precursor tRNA. This Kineococcus radiotolerans (strain ATCC BAA-149 / DSM 14245 / SRS30216) protein is Ribonuclease Z.